Consider the following 118-residue polypeptide: Protein TusC (118 aa).

The protein belongs to the DsrF/TusC family. As to quaternary structure, heterohexamer, formed by a dimer of trimers. The hexameric TusBCD complex contains 2 copies each of TusB, TusC and TusD. The TusBCD complex interacts with TusE.

The protein resides in the cytoplasm. Part of a sulfur-relay system required for 2-thiolation of 5-methylaminomethyl-2-thiouridine (mnm(5)s(2)U) at tRNA wobble positions. The polypeptide is Protein TusC (Salmonella paratyphi C (strain RKS4594)).